We begin with the raw amino-acid sequence, 45 residues long: Large ribosomal subunit protein bL36 (45 aa).

A disordered region spans residues 1 to 45 (MRVSSSIKADPSKGDKLVRRKGRLYVINKKDPNRKQRQAGPARKK).

This sequence belongs to the bacterial ribosomal protein bL36 family.

This is Large ribosomal subunit protein bL36 from Chlamydia trachomatis serovar L2 (strain ATCC VR-902B / DSM 19102 / 434/Bu).